The chain runs to 269 residues: LOB domain-containing protein 6 (269 aa).

One can recognise an LOB domain in the interval Ser37–Leu138.

It belongs to the LOB domain-containing protein family.

It localises to the nucleus. Its function is as follows. Negative regulator of cell proliferation in the adaxial side of leaves. Regulates the formation of a symmetric lamina and the establishment of venation. The chain is LOB domain-containing protein 6 (LBD6) from Oryza sativa subsp. indica (Rice).